A 698-amino-acid chain; its full sequence is Elongation factor G (698 aa).

The tr-type G domain maps to 10–285 (DKTRNIGIMA…AVVDYLPSPL (276 aa)). GTP is bound by residues 19–26 (AHIDAGKT), 83–87 (DTPGH), and 137–140 (NKMD).

It belongs to the TRAFAC class translation factor GTPase superfamily. Classic translation factor GTPase family. EF-G/EF-2 subfamily.

The protein resides in the cytoplasm. Its function is as follows. Catalyzes the GTP-dependent ribosomal translocation step during translation elongation. During this step, the ribosome changes from the pre-translocational (PRE) to the post-translocational (POST) state as the newly formed A-site-bound peptidyl-tRNA and P-site-bound deacylated tRNA move to the P and E sites, respectively. Catalyzes the coordinated movement of the two tRNA molecules, the mRNA and conformational changes in the ribosome. The polypeptide is Elongation factor G (Lactiplantibacillus plantarum (strain ATCC BAA-793 / NCIMB 8826 / WCFS1) (Lactobacillus plantarum)).